Reading from the N-terminus, the 252-residue chain is Serine/threonine phosphatase stp (252 aa).

Residues 1 to 18 (MHAEFRTDRGRIRHHNED) show a composition bias toward basic and acidic residues. Residues 1–23 (MHAEFRTDRGRIRHHNEDNGGVF) form a disordered region. A PPM-type phosphatase domain is found at 2–242 (HAEFRTDRGR…DNITVLLVER (241 aa)). The Mn(2+) site is built by Asp36, Gly37, Asp194, and Asp233.

This sequence belongs to the PP2C family. Requires Mn(2+) as cofactor.

Its subcellular location is the cytoplasm. The protein resides in the membrane. It carries out the reaction O-phospho-L-seryl-[protein] + H2O = L-seryl-[protein] + phosphate. It catalyses the reaction O-phospho-L-threonyl-[protein] + H2O = L-threonyl-[protein] + phosphate. Its activity is regulated as follows. Activity not affected by inhibitors of phosphatases of the PPP family such as okadaic acid and cypermethrin, or by inhibitors of phosphatases of the PTP family such as sodium orthovanadate. Functionally, protein phosphatase that dephosphorylates EF-Tu. In Listeria monocytogenes serovar 1/2a (strain ATCC BAA-679 / EGD-e), this protein is Serine/threonine phosphatase stp (stp).